We begin with the raw amino-acid sequence, 192 residues long: Sarcoplasmic calcium-binding protein 1 (192 aa).

Ala1 bears the N-acetylalanine mark. EF-hand domains follow at residues 4–39 (WDNRVKYVVRYMYDIDNNGFLDKNDFECLALRNTLI), 56–91 (IMSNLWNEIAELADFNKDGEVTIDEFKKAVQNVCVG), 100–135 (AFKVFIANQFKTVDVNGDGLVGVDEYRLDCISRSAF), and 136–171 (ANIKEIDDAYNKLATDADKKAGGISLARYQELYAQF). Ca(2+) is bound by residues Asp17, Asp19, Asn21, Asp28, Asp69, Asn71, Asp73, Glu75, Glu80, Asp113, Asn115, Asp117, and Glu124.

In terms of assembly, SCPs from crayfish, lobster, and shrimp are polymorphic dimers.

Like parvalbumins, SCPs seem to be more abundant in fast contracting muscles, but no functional relationship can be established from this distribution. This is Sarcoplasmic calcium-binding protein 1 from Astacus leptodactylus (Turkish narrow-clawed crayfish).